The primary structure comprises 542 residues: CTP synthase (542 aa).

The segment at 1 to 265 (MARYVFITGG…DSEVLSAFGI (265 aa)) is amidoligase domain. Serine 13 serves as a coordination point for CTP. Serine 13 provides a ligand contact to UTP. Residue 14–19 (SLGKGI) participates in ATP binding. Tyrosine 54 serves as a coordination point for L-glutamine. ATP is bound at residue aspartate 71. Residues aspartate 71 and glutamate 139 each contribute to the Mg(2+) site. CTP-binding positions include 146-148 (DIE), 186-191 (KTKPTQ), and lysine 222. UTP-binding positions include 186-191 (KTKPTQ) and lysine 222. Positions 291–541 (TIAVVGKYTG…IEAAIEQSRL (251 aa)) constitute a Glutamine amidotransferase type-1 domain. Residue glycine 353 participates in L-glutamine binding. The active-site Nucleophile; for glutamine hydrolysis is cysteine 380. Residues 381–384 (FGMQ), glutamate 404, and arginine 469 contribute to the L-glutamine site. Catalysis depends on residues histidine 514 and glutamate 516.

This sequence belongs to the CTP synthase family. Homotetramer.

The enzyme catalyses UTP + L-glutamine + ATP + H2O = CTP + L-glutamate + ADP + phosphate + 2 H(+). It catalyses the reaction L-glutamine + H2O = L-glutamate + NH4(+). The catalysed reaction is UTP + NH4(+) + ATP = CTP + ADP + phosphate + 2 H(+). It participates in pyrimidine metabolism; CTP biosynthesis via de novo pathway; CTP from UDP: step 2/2. Its activity is regulated as follows. Allosterically activated by GTP, when glutamine is the substrate; GTP has no effect on the reaction when ammonia is the substrate. The allosteric effector GTP functions by stabilizing the protein conformation that binds the tetrahedral intermediate(s) formed during glutamine hydrolysis. Inhibited by the product CTP, via allosteric rather than competitive inhibition. Functionally, catalyzes the ATP-dependent amination of UTP to CTP with either L-glutamine or ammonia as the source of nitrogen. Regulates intracellular CTP levels through interactions with the four ribonucleotide triphosphates. This chain is CTP synthase, found in Brucella suis (strain ATCC 23445 / NCTC 10510).